Here is a 448-residue protein sequence, read N- to C-terminus: Trk system potassium uptake protein TrkA homolog 1 (448 aa).

Positions 1-124 constitute an RCK N-terminal 1 domain; that stretch reads MKAVIIGAGE…RAQVGVDLMI (124 aa). NAD(+)-binding positions include 7–11, Asp29, 70–71, and Arg101; these read GAGEV and TG. The region spanning 144-225 is the RCK C-terminal 1 domain; that stretch reads IDAEMFAEGK…MEDLESVFGS (82 aa). In terms of domain architecture, RCK N-terminal 2 spans 230–348; sequence RTRILLIGCG…FEMVGIDMAV (119 aa). Residue 232–262 participates in NAD(+) binding; that stretch reads RILLIGCGIVGMYLAKLIDKEENADLRIIEH. Residues 368–448 enclose the RCK C-terminal 2 domain; sequence QTLTTIEGER…AASEVEKYFK (81 aa).

In terms of biological role, part of a potassium transport system. This Methanosarcina mazei (strain ATCC BAA-159 / DSM 3647 / Goe1 / Go1 / JCM 11833 / OCM 88) (Methanosarcina frisia) protein is Trk system potassium uptake protein TrkA homolog 1 (trkA1).